Reading from the N-terminus, the 509-residue chain is ATP synthase subunit alpha (509 aa).

Residue 169-176 (GDRQTGKT) coordinates ATP.

It belongs to the ATPase alpha/beta chains family. F-type ATPases have 2 components, CF(1) - the catalytic core - and CF(0) - the membrane proton channel. CF(1) has five subunits: alpha(3), beta(3), gamma(1), delta(1), epsilon(1). CF(0) has three main subunits: a(1), b(2) and c(9-12). The alpha and beta chains form an alternating ring which encloses part of the gamma chain. CF(1) is attached to CF(0) by a central stalk formed by the gamma and epsilon chains, while a peripheral stalk is formed by the delta and b chains.

The protein resides in the cell inner membrane. The catalysed reaction is ATP + H2O + 4 H(+)(in) = ADP + phosphate + 5 H(+)(out). Its function is as follows. Produces ATP from ADP in the presence of a proton gradient across the membrane. The alpha chain is a regulatory subunit. This chain is ATP synthase subunit alpha, found in Parvibaculum lavamentivorans (strain DS-1 / DSM 13023 / NCIMB 13966).